The primary structure comprises 250 residues: NADH-quinone oxidoreductase subunit C (250 aa).

Belongs to the complex I 30 kDa subunit family. In terms of assembly, NDH-1 is composed of 14 different subunits. Subunits NuoB, C, D, E, F, and G constitute the peripheral sector of the complex.

It localises to the cell inner membrane. The catalysed reaction is a quinone + NADH + 5 H(+)(in) = a quinol + NAD(+) + 4 H(+)(out). Functionally, NDH-1 shuttles electrons from NADH, via FMN and iron-sulfur (Fe-S) centers, to quinones in the respiratory chain. The immediate electron acceptor for the enzyme in this species is believed to be ubiquinone. Couples the redox reaction to proton translocation (for every two electrons transferred, four hydrogen ions are translocated across the cytoplasmic membrane), and thus conserves the redox energy in a proton gradient. The chain is NADH-quinone oxidoreductase subunit C from Xylella fastidiosa (strain 9a5c).